The following is a 113-amino-acid chain: UPF0482 protein CKO_01577 (113 aa).

The signal sequence occupies residues 1–28 (MNNTLSKRLCLTAMLALGAVVYTTSAFA). Positions 44–67 (RQHAAMEKEQWNDTRSLRQKVNTR) are disordered. The segment covering 47–59 (AAMEKEQWNDTRS) has biased composition (basic and acidic residues).

This sequence belongs to the UPF0482 family.

The sequence is that of UPF0482 protein CKO_01577 from Citrobacter koseri (strain ATCC BAA-895 / CDC 4225-83 / SGSC4696).